A 178-amino-acid polypeptide reads, in one-letter code: Large ribosomal subunit protein uL6 (178 aa).

This sequence belongs to the universal ribosomal protein uL6 family. In terms of assembly, part of the 50S ribosomal subunit.

In terms of biological role, this protein binds to the 23S rRNA, and is important in its secondary structure. It is located near the subunit interface in the base of the L7/L12 stalk, and near the tRNA binding site of the peptidyltransferase center. The protein is Large ribosomal subunit protein uL6 of Leuconostoc mesenteroides subsp. mesenteroides (strain ATCC 8293 / DSM 20343 / BCRC 11652 / CCM 1803 / JCM 6124 / NCDO 523 / NBRC 100496 / NCIMB 8023 / NCTC 12954 / NRRL B-1118 / 37Y).